The chain runs to 236 residues: Uridylate kinase (236 aa).

Position 12–15 (12–15 (KISG)) interacts with ATP. The tract at residues 20–25 (GKKGFG) is involved in allosteric activation by GTP. G54 serves as a coordination point for UMP. The ATP site is built by G55 and R59. Residues D72 and 133 to 140 (TGNPYFST) contribute to the UMP site. The ATP site is built by Y166 and D169.

This sequence belongs to the UMP kinase family. Homohexamer.

The protein localises to the cytoplasm. It carries out the reaction UMP + ATP = UDP + ADP. It functions in the pathway pyrimidine metabolism; CTP biosynthesis via de novo pathway; UDP from UMP (UMPK route): step 1/1. Allosterically activated by GTP. Inhibited by UTP. Its function is as follows. Catalyzes the reversible phosphorylation of UMP to UDP. The protein is Uridylate kinase of Clostridium novyi (strain NT).